A 436-amino-acid chain; its full sequence is Glutamate-1-semialdehyde 2,1-aminomutase (436 aa).

At K274 the chain carries N6-(pyridoxal phosphate)lysine.

The protein belongs to the class-III pyridoxal-phosphate-dependent aminotransferase family. HemL subfamily. Homodimer. Requires pyridoxal 5'-phosphate as cofactor.

It is found in the cytoplasm. The catalysed reaction is (S)-4-amino-5-oxopentanoate = 5-aminolevulinate. Its pathway is porphyrin-containing compound metabolism; protoporphyrin-IX biosynthesis; 5-aminolevulinate from L-glutamyl-tRNA(Glu): step 2/2. In Albidiferax ferrireducens (strain ATCC BAA-621 / DSM 15236 / T118) (Rhodoferax ferrireducens), this protein is Glutamate-1-semialdehyde 2,1-aminomutase.